A 502-amino-acid polypeptide reads, in one-letter code: ATP synthase subunit alpha (502 aa).

An ATP-binding site is contributed by 169–176; it reads GDRQTGKT.

Belongs to the ATPase alpha/beta chains family. F-type ATPases have 2 components, CF(1) - the catalytic core - and CF(0) - the membrane proton channel. CF(1) has five subunits: alpha(3), beta(3), gamma(1), delta(1), epsilon(1). CF(0) has three main subunits: a(1), b(2) and c(9-12). The alpha and beta chains form an alternating ring which encloses part of the gamma chain. CF(1) is attached to CF(0) by a central stalk formed by the gamma and epsilon chains, while a peripheral stalk is formed by the delta and b chains.

It is found in the cell membrane. The enzyme catalyses ATP + H2O + 4 H(+)(in) = ADP + phosphate + 5 H(+)(out). Functionally, produces ATP from ADP in the presence of a proton gradient across the membrane. The alpha chain is a regulatory subunit. The chain is ATP synthase subunit alpha from Clostridium perfringens (strain ATCC 13124 / DSM 756 / JCM 1290 / NCIMB 6125 / NCTC 8237 / Type A).